A 472-amino-acid chain; its full sequence is MVTINTESALTPRSLRDTRRMNMFVSVAAAVAGLLFGLDIGVIAGALPFITDHFVLTSRLQEWVVSSMMLGAAIGALFNGWLSFRLGRKYSLMAGAILFVLGSIGSAFATSVEMLIAARVVLGIAVGIASYTAPLYLSEMASENVRGKMISMYQLMVTLGIVLAFLSDTAFSYSGNWRAMLGVLALPAVLLIILVVFLPNSPRWLAEKGRHIEAEEVLRMLRDTSEKAREELNEIRESLKLKQGGWALFKINRNVRRAVFLGMLLQAMQQFTGMNIIMYYAPRIFKMAGFTTTEQQMIATLVVGLTFMFATFIAVFTVDKAGRKPALKIGFSVMALGTLVLGYCLMQFDNGTASSGLSWLSVGMTMMCIAGYAMSAAPVVWILCSEIQPLKCRDFGITCSTTTNWVSNMIIGATFLTLLDSIGAAGTFWLYTALNIAFVGITFWLIPETKNVTLEHIERKLMAGEKLRNIGV.

Over 1-29 (MVTINTESALTPRSLRDTRRMNMFVSVAA) the chain is Cytoplasmic. A helical transmembrane segment spans residues 30 to 50 (AVAGLLFGLDIGVIAGALPFI). At 51-63 (TDHFVLTSRLQEW) the chain is on the periplasmic side. Residues 64 to 84 (VVSSMMLGAAIGALFNGWLSF) traverse the membrane as a helical segment. At 85–91 (RLGRKYS) the chain is on the cytoplasmic side. A helical transmembrane segment spans residues 92-112 (LMAGAILFVLGSIGSAFATSV). Residues 113 to 114 (EM) are Periplasmic-facing. A helical transmembrane segment spans residues 115–135 (LIAARVVLGIAVGIASYTAPL). The Cytoplasmic portion of the chain corresponds to 136–154 (YLSEMASENVRGKMISMYQ). A helical transmembrane segment spans residues 155-175 (LMVTLGIVLAFLSDTAFSYSG). Residues 176 to 178 (NWR) are Periplasmic-facing. Residues 179–199 (AMLGVLALPAVLLIILVVFLP) traverse the membrane as a helical segment. Topologically, residues 200–257 (NSPRWLAEKGRHIEAEEVLRMLRDTSEKAREELNEIRESLKLKQGGWALFKINRNVRR) are cytoplasmic. A helical membrane pass occupies residues 258–278 (AVFLGMLLQAMQQFTGMNIIM). Topologically, residues 279-297 (YYAPRIFKMAGFTTTEQQM) are periplasmic. Residues 298 to 318 (IATLVVGLTFMFATFIAVFTV) traverse the membrane as a helical segment. At 319 to 325 (DKAGRKP) the chain is on the cytoplasmic side. Residues 326–346 (ALKIGFSVMALGTLVLGYCLM) traverse the membrane as a helical segment. At 347–361 (QFDNGTASSGLSWLS) the chain is on the periplasmic side. Residues 362–382 (VGMTMMCIAGYAMSAAPVVWI) form a helical membrane-spanning segment. Residues 383-404 (LCSEIQPLKCRDFGITCSTTTN) lie on the Cytoplasmic side of the membrane. 2 helical membrane-spanning segments follow: residues 405–425 (WVSN…IGAA) and 426–446 (GTFW…FWLI). Topologically, residues 447–472 (PETKNVTLEHIERKLMAGEKLRNIGV) are cytoplasmic.

Belongs to the major facilitator superfamily. Sugar transporter (TC 2.A.1.1) family.

It is found in the cell inner membrane. It carries out the reaction L-arabinose(in) + H(+)(in) = L-arabinose(out) + H(+)(out). Functionally, uptake of L-arabinose across the cytoplasmic membrane with the concomitant transport of protons into the cell (symport system). This chain is Arabinose-proton symporter (araE), found in Escherichia coli O157:H7.